Reading from the N-terminus, the 1405-residue chain is MEEKRYLKRKEKARSDGNRDQVAVSCNQLGDFYNQQGKYTDAVREYVQEAQIYASMGKELETAKAKRMVGEMYTLLCDYDAAKDHINDYLKIAKRLKNQVEEQRAYATLGRVHLLHGQSLADSSASGSMEQLKLAEKNFLRSLLLIKDLSGQISKLEQLDMQARCYLNIGVVKEHMEAFQESIEYIDKAIKISKTHELWDLTHLCYISMSLLYICKKNDATAALRFCNMALEVAKRFPNKVKKICETLITKAEILIKAGDFASAKQILTKAYKKNTPDENDRVNIEKQLRIVVKVCQTLDELVLTSSVDYAKLKGLYEKLGDGCCHLMNYEKALTYYQKMLENAELNQESGKSLVPIYVSLYQTYRDNGQFDKALEYLWKEFELNQDAPSEAFTTLCTIAEICEQQSHPFWTVHDVYQKALRQADKAGSCSDKLVKIAMVRLRRLMLKHNMQVLVENLEADATAKGIDLDQEESVGDDEEESDGGGTAVQQNTPDWDDDFDLATLTDSDASDLDETEKPRPQRTTRGNRTLVIKKNNKGETQLHQACISGNLELVRRLIDQGHTVNVRDHAGWLPLHEACNHGYREIVELLLDKGAASAINDKGGTSCDGITPLFDACSNGFLDVAELLLDRGADATVRTDYNETCIAGLDKWRQGAQLVDGEQAQYAQLRERLLRTLSKVGICSDKNARPLTNFNAKRISREERGSMSEEEDEEEALHESNRRSLSHNRSGSEYGAKKSKSSTQPSASKEYRSVMAHLKRPNRLNDDPPSTSTLNKHKRNAFLSEDEVDADNWLIDDVGPERKRKRINSGDLSRRTSKENFQDTALSLPANWEDDLLQATPENEYSQRQKQMRKLTLSRSSSMSSNHSSSATSSRKKHQATLLDSGFSRFRSESPLGSESSQDGTTSLISVRTIEPDSTTSTIQVLISPAKSSPIKVQATPVLATTVSFKVKIQDELLLVPIERKKLQDINIRWLAEEAGRRYNKLTGLTPLLRLKTADGFAYEETDPVSVALEQNMLMASILDWKISPLSQRYEEMCLQMQKTVDNKVKLLLERSQNNNMLELSGLWMRAEKTEPIFKALLHQARLTVLDLSCNFIGNEGCQQLAKSLPTLLQLKALRLQCNAIGSHGLEALLCGQGMDKLELLEELNLNQNPLGNASVRILSKYCASPAGQALTCLQLAQCELTELQDFDLGFNKLTRFDISFNQLTQQSVRRLTDQLNSCRLEQLNLSYVRWPLDDASGFALSERLVTLFEGGTCERFVGVQLAGCGLNDAHMYNISQHLAKAKQLQMLDISDNSNLSGTTLGYILDELPQLRDLLAVNCTNLLDDIRLQKLEQLKQLPRRLELTVDEQVFSMPGALETLQSIWQLQFGDKAKMLTTSNSRKIGRRYKGLLKLLADGSDAE.

TPR repeat units lie at residues 23 to 56 (AVSCNQLGDFYNQQGKYTDAVREYVQEAQIYASM), 63 to 96 (AKAKRMVGEMYTLLCDYDAAKDHINDYLKIAKRL), 163 to 196 (ARCYLNIGVVKEHMEAFQESIEYIDKAIKISKTH), 203 to 237 (HLCYISMSLLYICKKNDATAALRFCNMALEVAKRF), 245 to 278 (CETLITKAEILIKAGDFASAKQILTKAYKKNTPD), 314 to 347 (KGLYEKLGDGCCHLMNYEKALTYYQKMLENAELN), and 355 to 388 (VPIYVSLYQTYRDNGQFDKALEYLWKEFELNQDA). The LRR 1 repeat unit spans residues 153 to 181 (ISKLEQLDMQARCYLNIGVVKEHMEAFQE). An LRR 2 repeat occupies 439–465 (MVRLRRLMLKHNMQVLVENLEADATAK). The tract at residues 465 to 535 (KGIDLDQEES…RGNRTLVIKK (71 aa)) is disordered. The segment covering 469–483 (LDQEESVGDDEEESD) has biased composition (acidic residues). ANK repeat units lie at residues 538 to 567 (KGETQLHQACISGNLELVRRLIDQGHTVNV), 571 to 600 (AGWLPLHEACNHGYREIVELLLDKGAASAI), and 609 to 638 (DGITPLFDACSNGFLDVAELLLDRGADATV). Disordered regions lie at residues 695–753 (FNAK…KEYR), 806–827 (KRINSGDLSRRTSKENFQDTAL), and 841–880 (TPENEYSQRQKQMRKLTLSRSSSMSSNHSSSATSSRKKHQ). Residues Ser707 and Ser709 each carry the phosphoserine modification. Basic and acidic residues predominate over residues 813-822 (LSRRTSKENF). Positions 841 to 850 (TPENEYSQRQ) are enriched in polar residues. Over residues 859–874 (SRSSSMSSNHSSSATS) the composition is skewed to low complexity. Ser893, Ser895, Ser899, and Ser902 each carry phosphoserine. LRR repeat units lie at residues 1085-1108 (QARLTVLDLSCNFIGNEGCQQLAK), 1113-1137 (LLQLKALRLQCNAIGSHGLEALLCG), 1143-1166 (LELLEELNLNQNPLGNASVRILSK), 1186-1211 (LTELQDFDLGFNKLTRFDISFNQLTQ), 1287-1311 (AKQLQMLDISDNSNLSGTTLGYILD), and 1333-1357 (LQKLEQLKQLPRRLELTVDEQVFSM).

This sequence belongs to the Tonsoku family.

It localises to the nucleus. The protein localises to the nucleoplasm. It is found in the chromosome. Functionally, histone reader involved in homologous recombination-mediated repair of double-strand breaks (DSBs) at stalled or collapsed replication forks. Specifically recognizes and binds histone H3.1. The polypeptide is Tonsoku-like protein (Drosophila melanogaster (Fruit fly)).